The chain runs to 645 residues: Cell pattern formation-associated protein stuA (645 aa).

Positions 1 to 52 are disordered; that stretch reads MNQMQPYADVHQPHMSTAAHAPASGPPAGLSHYSYPHQPSMMQPQQQQHQYG. The segment covering 18–52 has biased composition (low complexity); the sequence is AAHAPASGPPAGLSHYSYPHQPSMMQPQQQQHQYG. An HTH APSES-type domain is found at 124 to 230; the sequence is RVTATLWEDE…HDIGALLYHP (107 aa). A DNA-binding region (H-T-H motif) is located at residues 158-179; that stretch reads GTKLLNVAGMTRGRRDGILKSE. The segment at 246–645 is disordered; sequence VDRNRRPDSM…HTLAAQRARR (400 aa). 2 stretches are compositionally biased toward polar residues: residues 254-271 and 279-288; these read SMQT…SQAP and MTNSVGSAMS. Residues 317–330 are compositionally biased toward low complexity; the sequence is SASSMMGMGNQGSS. Polar residues predominate over residues 336-365; it reads ANVQQHPQGNQPLSIDTGLSNARSVPTTPA. Positions 469 to 481 are enriched in low complexity; it reads PYNGNRGPYGYNP. 2 stretches are compositionally biased toward polar residues: residues 502 to 542 and 569 to 584; these read SPHQ…NLYN and YASQ…NSSG. A nuclear localization domain region spans residues 585–613; sequence KRGRDEEDAETYRPDSVQGDDMGGLKRRK. Residues 586 to 597 are compositionally biased toward basic and acidic residues; sequence RGRDEEDAETYR.

This sequence belongs to the EFG1/PHD1/stuA family.

It localises to the nucleus. Functionally, transcription factor that regulates asexual reproduction. Binds the StuA-response elements (StRE) with the consensus sequence 5'-(A/T)CGCG(T/A)N(A/C)-3' at the promoters of target genes. Regulates the expression of several effector genes (AvrLm1, AvrLm6 and AvrLm4-7) during infection stage. This Leptosphaeria maculans (strain JN3 / isolate v23.1.3 / race Av1-4-5-6-7-8) (Blackleg fungus) protein is Cell pattern formation-associated protein stuA.